Consider the following 466-residue polypeptide: UDP-N-acetylmuramate--L-alanine ligase (466 aa).

119–125 is a binding site for ATP; it reads GTHGKTT.

This sequence belongs to the MurCDEF family.

Its subcellular location is the cytoplasm. It catalyses the reaction UDP-N-acetyl-alpha-D-muramate + L-alanine + ATP = UDP-N-acetyl-alpha-D-muramoyl-L-alanine + ADP + phosphate + H(+). It functions in the pathway cell wall biogenesis; peptidoglycan biosynthesis. Functionally, cell wall formation. The polypeptide is UDP-N-acetylmuramate--L-alanine ligase (Cytophaga hutchinsonii (strain ATCC 33406 / DSM 1761 / CIP 103989 / NBRC 15051 / NCIMB 9469 / D465)).